The primary structure comprises 469 residues: UDP-N-acetylmuramate--L-alanine ligase (469 aa).

119-125 (GTHGKTT) provides a ligand contact to ATP.

It belongs to the MurCDEF family.

It localises to the cytoplasm. It catalyses the reaction UDP-N-acetyl-alpha-D-muramate + L-alanine + ATP = UDP-N-acetyl-alpha-D-muramoyl-L-alanine + ADP + phosphate + H(+). Its pathway is cell wall biogenesis; peptidoglycan biosynthesis. Its function is as follows. Cell wall formation. In Ruthia magnifica subsp. Calyptogena magnifica, this protein is UDP-N-acetylmuramate--L-alanine ligase.